We begin with the raw amino-acid sequence, 394 residues long: Cobalt-precorrin-5B C(1)-methyltransferase (394 aa).

It belongs to the CbiD family.

The enzyme catalyses Co-precorrin-5B + S-adenosyl-L-methionine = Co-precorrin-6A + S-adenosyl-L-homocysteine. It functions in the pathway cofactor biosynthesis; adenosylcobalamin biosynthesis; cob(II)yrinate a,c-diamide from sirohydrochlorin (anaerobic route): step 6/10. In terms of biological role, catalyzes the methylation of C-1 in cobalt-precorrin-5B to form cobalt-precorrin-6A. This is Cobalt-precorrin-5B C(1)-methyltransferase from Clostridium beijerinckii (strain ATCC 51743 / NCIMB 8052) (Clostridium acetobutylicum).